Reading from the N-terminus, the 192-residue chain is UPF0301 protein Bcen_0382 (192 aa).

Belongs to the UPF0301 (AlgH) family.

The sequence is that of UPF0301 protein Bcen_0382 from Burkholderia orbicola (strain AU 1054).